We begin with the raw amino-acid sequence, 701 residues long: Elongation factor G (701 aa).

The region spanning 8–291 is the tr-type G domain; that stretch reads SRYRNIGIVA…AVIDYLPAPV (284 aa). GTP contacts are provided by residues 17 to 24, 89 to 93, and 143 to 146; these read AHVDAGKT, DTPGH, and NKMD.

It belongs to the TRAFAC class translation factor GTPase superfamily. Classic translation factor GTPase family. EF-G/EF-2 subfamily.

The protein resides in the cytoplasm. In terms of biological role, catalyzes the GTP-dependent ribosomal translocation step during translation elongation. During this step, the ribosome changes from the pre-translocational (PRE) to the post-translocational (POST) state as the newly formed A-site-bound peptidyl-tRNA and P-site-bound deacylated tRNA move to the P and E sites, respectively. Catalyzes the coordinated movement of the two tRNA molecules, the mRNA and conformational changes in the ribosome. This Pseudomonas fluorescens (strain SBW25) protein is Elongation factor G.